A 258-amino-acid chain; its full sequence is Phosphate import ATP-binding protein PstB (258 aa).

The region spanning 13–253 (IEVENLNLWY…PKEQSTEDYI (241 aa)) is the ABC transporter domain. 45 to 52 (GPSGCGKS) provides a ligand contact to ATP.

It belongs to the ABC transporter superfamily. Phosphate importer (TC 3.A.1.7) family. In terms of assembly, the complex is composed of two ATP-binding proteins (PstB), two transmembrane proteins (PstC and PstA) and a solute-binding protein (PstS).

It is found in the cell membrane. The enzyme catalyses phosphate(out) + ATP + H2O = ADP + 2 phosphate(in) + H(+). Its function is as follows. Part of the ABC transporter complex PstSACB involved in phosphate import. Responsible for energy coupling to the transport system. The sequence is that of Phosphate import ATP-binding protein PstB from Methanosarcina acetivorans (strain ATCC 35395 / DSM 2834 / JCM 12185 / C2A).